A 197-amino-acid chain; its full sequence is MTDQTPTLLLASSSPFRRQLLDKLKLDFIHQSPDIDESRHEDESPTALVMRLAREKALALADQHPNTLIIGSDQVAVIGNQVLGKPGDRDTAIRQLSAASGKRVSFLTGLCLLNTATGRSQVVCDPFHVQFRTLKPAQIERYVDIEQPLNCAGSFKSEGLGIVLFKALEGRDPNTLVGLPLIILTEFLAAEGVQLPL.

The active-site Proton acceptor is the D73.

It belongs to the Maf family. YceF subfamily. It depends on a divalent metal cation as a cofactor.

Its subcellular location is the cytoplasm. It catalyses the reaction N(7)-methyl-GTP + H2O = N(7)-methyl-GMP + diphosphate + H(+). In terms of biological role, nucleoside triphosphate pyrophosphatase that hydrolyzes 7-methyl-GTP (m(7)GTP). May have a dual role in cell division arrest and in preventing the incorporation of modified nucleotides into cellular nucleic acids. The protein is 7-methyl-GTP pyrophosphatase of Alcanivorax borkumensis (strain ATCC 700651 / DSM 11573 / NCIMB 13689 / SK2).